Reading from the N-terminus, the 398-residue chain is Phosphoglycerate kinase (398 aa).

Substrate-binding positions include 21 to 23 (DFN), arginine 36, 59 to 62 (HLGR), arginine 119, and arginine 157. ATP contacts are provided by residues lysine 208, glycine 296, glutamate 327, and 354–357 (GGDS).

The protein belongs to the phosphoglycerate kinase family. Monomer.

It is found in the cytoplasm. It catalyses the reaction (2R)-3-phosphoglycerate + ATP = (2R)-3-phospho-glyceroyl phosphate + ADP. The protein operates within carbohydrate degradation; glycolysis; pyruvate from D-glyceraldehyde 3-phosphate: step 2/5. This chain is Phosphoglycerate kinase, found in Streptococcus equi subsp. zooepidemicus (strain MGCS10565).